Here is a 591-residue protein sequence, read N- to C-terminus: N-acetylgalactosaminyltransferase 7 (591 aa).

Residues 1–11 (MRVSTIRSGRI) are Cytoplasmic-facing. Residues 12-29 (CRLALCLLVLLPLLYLLA) traverse the membrane as a helical; Signal-anchor for type II membrane protein segment. Asn30 carries an N-linked (GlcNAc...) asparagine glycan. At 30–591 (NWSDHHKRVQ…WWFKEIRPRW (562 aa)) the chain is on the lumenal side. The tract at residues 68–100 (DGLGNFEPKDVKPRSGPGENGEAHSLSPDKKHM) is disordered. Cystine bridges form between Cys132–Cys367, Cys358–Cys441, Cys479–Cys496, Cys519–Cys532, and Cys558–Cys573. The interval 141–251 (LPRTSVIIVF…TNWLPPLLAP (111 aa)) is catalytic subdomain A. Substrate contacts are provided by Asp182 and Arg212. Mn(2+) is bound by residues Asp235 and His237. The tract at residues 313–375 (PYRSPTHAGG…PCSRVGHVYR (63 aa)) is catalytic subdomain B. Substrate is bound at residue Trp344. His372 is a binding site for Mn(2+). Substrate is bound by residues Arg375 and Tyr380. In terms of domain architecture, Ricin B-type lectin spans 466-585 (LHWGELRSVA…NDSYQQWWFK (120 aa)). An N-linked (GlcNAc...) asparagine glycan is attached at Asn576.

This sequence belongs to the glycosyltransferase 2 family. GalNAc-T subfamily. Mn(2+) serves as cofactor. As to expression, expressed in developing oocytes and egg chambers. During embryonic stages 9-11, expressed in the primordium of the foregut, midgut and hindgut. Expressed in the salivary glands from embryonic stage 12 onwards. During embryonic stages 12-13, expressed in the posterior midgut and hindgut. During embryonic stages 14-15, expression continues in the hindgut. During embryonic stages 16-17, expressed in the antennomaxillary complex. In third instar larvae, ubiquitously expressed in wing, with increased expression in the notum and ventral wing pouch, eye-antennal, leg and haltere imaginal disks.

It localises to the golgi apparatus membrane. It carries out the reaction L-seryl-[protein] + UDP-N-acetyl-alpha-D-galactosamine = a 3-O-[N-acetyl-alpha-D-galactosaminyl]-L-seryl-[protein] + UDP + H(+). The catalysed reaction is L-threonyl-[protein] + UDP-N-acetyl-alpha-D-galactosamine = a 3-O-[N-acetyl-alpha-D-galactosaminyl]-L-threonyl-[protein] + UDP + H(+). The protein operates within protein modification; protein glycosylation. In terms of biological role, glycopeptide transferase involved in O-linked oligosaccharide biosynthesis, which catalyzes the transfer of an N-acetyl-D-galactosamine residue to an already glycosylated peptide. In contrast to other proteins of the family, it does not act as a peptide transferase that transfers GalNAc onto serine or threonine residue on the protein receptor, but instead requires the prior addition of a GalNAc on a peptide before adding additional GalNAc moieties. Some peptide transferase activity is however not excluded, considering that its appropriate peptide substrate may remain unidentified. Prefers the monoglycosylated Muc5AC-3 as substrate. Might have a role in protein O-glycosylation in the Golgi and thereby in establishing and/or maintaining a proper secretory apparatus structure. The chain is N-acetylgalactosaminyltransferase 7 from Drosophila melanogaster (Fruit fly).